The primary structure comprises 336 residues: Iron(3+)-hydroxamate import system permease protein FhuG (336 aa).

Helical transmembrane passes span 9–29 (LIVM…SLNL), 63–83 (IILS…LQSV), 91–111 (PGIL…IYFF), 124–144 (FMLP…IYIL), 155–175 (LILV…IFQL), 193–213 (IWGA…ILLL), 245–265 (ILLL…GGIA), 285–305 (TLIP…DTLA), and 313–333 (EIPV…YLLM).

The protein belongs to the binding-protein-dependent transport system permease family. FecCD subfamily. In terms of assembly, the complex is composed of an ATP-binding protein (FhuC), two transmembrane proteins (FhuB and FhuG) and a solute-binding protein (FhuD or YxeB).

It localises to the cell membrane. Part of the ABC transporter complex FhuBGCD involved in iron(3+)-hydroxamate import. Responsible for the translocation of the substrate across the membrane. The polypeptide is Iron(3+)-hydroxamate import system permease protein FhuG (fhuG) (Bacillus subtilis (strain 168)).